A 281-amino-acid polypeptide reads, in one-letter code: Ribosomal RNA small subunit methyltransferase A (281 aa).

The S-adenosyl-L-methionine site is built by histidine 25, leucine 27, glycine 52, glutamate 74, aspartate 100, and asparagine 119.

This sequence belongs to the class I-like SAM-binding methyltransferase superfamily. rRNA adenine N(6)-methyltransferase family. RsmA subfamily.

It localises to the cytoplasm. It catalyses the reaction adenosine(1518)/adenosine(1519) in 16S rRNA + 4 S-adenosyl-L-methionine = N(6)-dimethyladenosine(1518)/N(6)-dimethyladenosine(1519) in 16S rRNA + 4 S-adenosyl-L-homocysteine + 4 H(+). Its function is as follows. Specifically dimethylates two adjacent adenosines (A1518 and A1519) in the loop of a conserved hairpin near the 3'-end of 16S rRNA in the 30S particle. May play a critical role in biogenesis of 30S subunits. This is Ribosomal RNA small subunit methyltransferase A from Paramagnetospirillum magneticum (strain ATCC 700264 / AMB-1) (Magnetospirillum magneticum).